Consider the following 90-residue polypeptide: Putative sodium channel toxin Ts35 (90 aa).

The signal sequence occupies residues 1-22 (QDEVGLGSCSVIFVVGNEEGEA). Positions 23 to 87 (KDGYAVGGDR…WGNPTLGPCL (65 aa)) constitute an LCN-type CS-alpha/beta domain. Intrachain disulfides connect Cys33-Cys86, Cys37-Cys61, Cys46-Cys66, and Cys50-Cys68.

This sequence belongs to the long (4 C-C) scorpion toxin superfamily. Sodium channel inhibitor family. Expressed by the venom gland.

It localises to the secreted. Putative sodium channel toxin. The polypeptide is Putative sodium channel toxin Ts35 (Tityus serrulatus (Brazilian scorpion)).